Here is a 136-residue protein sequence, read N- to C-terminus: Small cardioactive peptides (136 aa).

Positions 1–24 (METSVSRVTVSLTLLVLIICSADA) are cleaved as a signal peptide. Methionine amide occurs at positions 33 and 46. Residues 49-135 (SQMKTETGTD…VLSKLKSLLQ (87 aa)) constitute a propeptide, carboxy-terminal peptide.

It belongs to the SCP family. Contains three disulfide bonds. Highly expressed in the buccal ganglion.

The protein resides in the secreted. Involved in the stimulation of contractile activity in the gut, the increase of the amplitude of the heart beat, and enhancement of the contractile response of the radula closer muscle. The polypeptide is Small cardioactive peptides (Aplysia californica (California sea hare)).